Reading from the N-terminus, the 279-residue chain is Urease accessory protein UreD (279 aa).

This sequence belongs to the UreD family. In terms of assembly, ureD, UreF and UreG form a complex that acts as a GTP-hydrolysis-dependent molecular chaperone, activating the urease apoprotein by helping to assemble the nickel containing metallocenter of UreC. The UreE protein probably delivers the nickel.

Its subcellular location is the cytoplasm. Functionally, required for maturation of urease via the functional incorporation of the urease nickel metallocenter. The sequence is that of Urease accessory protein UreD from Paracoccus denitrificans (strain Pd 1222).